The primary structure comprises 68 residues: Protein ShdD (68 aa).

Its function is as follows. Involved in the non-oxidative decarboxylation and detoxification of phenolic derivatives under anaerobic conditions, however the precise biochemical function of ShdD in metabolism of phenolic acid is unknown. This is Protein ShdD from Sedimentibacter hydroxybenzoicus (Clostridium hydroxybenzoicum).